The following is a 171-amino-acid chain: MAELDIQISIENIGWPEEETLLAFCGRVLGAAAVYLRDSEKQPFPTMPPEVSLVFTDDASIQDINAEWRGKDKATNVLSFPAFPVQPGKMPGPMLGDIIIARETVEREAHELEKSFDDHLTHLLVHGFLHLLGYDHMNSAEAEIMEGLETRILAQLGLSDPYEGQDLKMEP.

Zn(2+) is bound by residues His-126, His-130, and His-136.

The protein belongs to the endoribonuclease YbeY family. Requires Zn(2+) as cofactor.

The protein localises to the cytoplasm. Single strand-specific metallo-endoribonuclease involved in late-stage 70S ribosome quality control and in maturation of the 3' terminus of the 16S rRNA. This chain is Endoribonuclease YbeY, found in Rhizobium etli (strain CIAT 652).